Reading from the N-terminus, the 482-residue chain is UDP-N-acetylmuramoyl-L-alanyl-D-glutamate--2,6-diaminopimelate ligase (482 aa).

Ser24 provides a ligand contact to UDP-N-acetyl-alpha-D-muramoyl-L-alanyl-D-glutamate. 105–111 lines the ATP pocket; it reads GTNGKTT. Residues 147–148, Ser174, Gln180, and Arg182 each bind UDP-N-acetyl-alpha-D-muramoyl-L-alanyl-D-glutamate; that span reads TT. Lys214 carries the post-translational modification N6-carboxylysine. Residues Arg378, 402–405, Gly453, and Glu457 each bind meso-2,6-diaminopimelate; that span reads DNPR. The Meso-diaminopimelate recognition motif signature appears at 402–405; that stretch reads DNPR.

It belongs to the MurCDEF family. MurE subfamily. It depends on Mg(2+) as a cofactor. In terms of processing, carboxylation is probably crucial for Mg(2+) binding and, consequently, for the gamma-phosphate positioning of ATP.

The protein resides in the cytoplasm. It catalyses the reaction UDP-N-acetyl-alpha-D-muramoyl-L-alanyl-D-glutamate + meso-2,6-diaminopimelate + ATP = UDP-N-acetyl-alpha-D-muramoyl-L-alanyl-gamma-D-glutamyl-meso-2,6-diaminopimelate + ADP + phosphate + H(+). The protein operates within cell wall biogenesis; peptidoglycan biosynthesis. Catalyzes the addition of meso-diaminopimelic acid to the nucleotide precursor UDP-N-acetylmuramoyl-L-alanyl-D-glutamate (UMAG) in the biosynthesis of bacterial cell-wall peptidoglycan. The polypeptide is UDP-N-acetylmuramoyl-L-alanyl-D-glutamate--2,6-diaminopimelate ligase (Lawsonia intracellularis (strain PHE/MN1-00)).